A 779-amino-acid polypeptide reads, in one-letter code: MAEAKTVPVLFLNDSIVLPGMVVPIELDDAARAAVDAARASESGELLIAPRLEDRYPAYGVLASIVQIGRLPNGDAAAVVRGERRAHIGSGTSGPGAALWVQVEEVTDPEPTDETKKLAGEYKKLLLAMLQRRDAWQIVDMVNKITDPSALADTAGYASYLTGTQKRELLETTDVDRRLSLLIGWTGDHLAETEVNDKIAEDVRTGMEKQQKEFLLRQQLAAIRKELGELDDNGDGSSDDYRARIEQADLPEKVREAALREVGKLERASDQSPEGGWIRTWLDTVLDLPWNVRTEDSTDLARAREILDTDHHGLSDVKDRIVEYLAVRGAAPQRGMAVVGGRGSGAVMVLAGPPGVGKTSLGESVARALDRKFVRVALGGVRDEAEIRGHRRTYVGALPGRIVRAIGEAGSMNPVVLLDEIDKVGSDYRGDPAAALLEVLDPAQNHTFRDHYLDLDLDLSDVVFLVTANVIENIPSALLDRMELVEIDGYTADDKLAIAQGFLLPRQRERGGLTSDEVTVTEAALRKIAADYTREPGVRQFERLLAKAMRKAATKLADHPQAAPITIDEPDLVEYLGRPRFLPESAERTAVPGVATGLAVTGLGGDVLYIEANSTEGEPGLQLTGQLGDVMKESAQIAMSYVRAHAKQLGVDPEALNRRIHIHVPAGAVPKDGPSAGVTMVTALVSMATGRKVRGDVGMTGEVTLNGRVLPIGGVKQKLLAAQRAGLSTVFIPQRNQPDLDDVPADVLDALDVRPMTDVADIIAAALEPAHEASTAAAA.

The Lon N-terminal domain occupies 7-190 (VPVLFLNDSI…LLIGWTGDHL (184 aa)). 352 to 359 (GPPGVGKT) contributes to the ATP binding site. The region spanning 589–769 (TAVPGVATGL…ADIIAAALEP (181 aa)) is the Lon proteolytic domain. Active-site residues include Ser-675 and Lys-718.

The protein belongs to the peptidase S16 family. Homohexamer. Organized in a ring with a central cavity. Oligomerization is Mg(2+)-dependent.

The protein resides in the cytoplasm. The enzyme catalyses Hydrolysis of proteins in presence of ATP.. Its activity is regulated as follows. Stimulated by unfolded protein. ATP-dependent serine protease that mediates the selective degradation of mutant and abnormal proteins as well as certain short-lived regulatory proteins. Required for cellular homeostasis and for survival from DNA damage and developmental changes induced by stress. Degrades polypeptides processively to yield small peptide fragments that are 5 to 10 amino acids long. Binds to DNA in a double-stranded, site-specific manner. This is Lon protease from Mycolicibacterium smegmatis (Mycobacterium smegmatis).